The following is a 32-amino-acid chain: MTQGAKKAPVIWVQGEGCTGCSVSLLNAVCPR.

2 residues coordinate [4Fe-4S] cluster: Cys-18 and Cys-21.

It belongs to the [NiFe]/[NiFeSe] hydrogenase small subunit family. In terms of assembly, heterodimer of a large and a small subunit. [3Fe-4S] cluster serves as cofactor. The cofactor is [4Fe-4S] cluster.

It is found in the periplasm. It carries out the reaction H2 + A = AH2. The protein is Periplasmic [NiFeSe] hydrogenase small subunit of Desulfomicrobium norvegicum (strain DSM 1741 / NCIMB 8310) (Desulfovibrio baculatus (strain Norway 4)).